The sequence spans 461 residues: Bifunctional protein GlmU (461 aa).

Residues 1 to 229 (MLKKEINVVI…CKEILGVNNK (229 aa)) form a pyrophosphorylase region. UDP-N-acetyl-alpha-D-glucosamine is bound by residues 11–14 (LAAG), Lys25, Gln76, 81–82 (GT), 103–105 (YGD), Gly140, Glu154, and Asn227. Asp105 provides a ligand contact to Mg(2+). Asn227 contributes to the Mg(2+) binding site. Positions 230–250 (LQLSILEKIFRKKQVNDLLLS) are linker. The N-acetyltransferase stretch occupies residues 251–461 (GVTLKDPNHF…PQKIIKKTDQ (211 aa)). Residues Arg333 and Lys351 each coordinate UDP-N-acetyl-alpha-D-glucosamine. His363 serves as the catalytic Proton acceptor. UDP-N-acetyl-alpha-D-glucosamine contacts are provided by Tyr366 and Asn377. Acetyl-CoA-binding positions include Ala380, 386–387 (NY), and Ala423.

The protein in the N-terminal section; belongs to the N-acetylglucosamine-1-phosphate uridyltransferase family. In the C-terminal section; belongs to the transferase hexapeptide repeat family. As to quaternary structure, homotrimer. It depends on Mg(2+) as a cofactor.

Its subcellular location is the cytoplasm. The enzyme catalyses alpha-D-glucosamine 1-phosphate + acetyl-CoA = N-acetyl-alpha-D-glucosamine 1-phosphate + CoA + H(+). It carries out the reaction N-acetyl-alpha-D-glucosamine 1-phosphate + UTP + H(+) = UDP-N-acetyl-alpha-D-glucosamine + diphosphate. It participates in nucleotide-sugar biosynthesis; UDP-N-acetyl-alpha-D-glucosamine biosynthesis; N-acetyl-alpha-D-glucosamine 1-phosphate from alpha-D-glucosamine 6-phosphate (route II): step 2/2. It functions in the pathway nucleotide-sugar biosynthesis; UDP-N-acetyl-alpha-D-glucosamine biosynthesis; UDP-N-acetyl-alpha-D-glucosamine from N-acetyl-alpha-D-glucosamine 1-phosphate: step 1/1. Its pathway is bacterial outer membrane biogenesis; LPS lipid A biosynthesis. Functionally, catalyzes the last two sequential reactions in the de novo biosynthetic pathway for UDP-N-acetylglucosamine (UDP-GlcNAc). The C-terminal domain catalyzes the transfer of acetyl group from acetyl coenzyme A to glucosamine-1-phosphate (GlcN-1-P) to produce N-acetylglucosamine-1-phosphate (GlcNAc-1-P), which is converted into UDP-GlcNAc by the transfer of uridine 5-monophosphate (from uridine 5-triphosphate), a reaction catalyzed by the N-terminal domain. The protein is Bifunctional protein GlmU of Buchnera aphidicola subsp. Schizaphis graminum (strain Sg).